The following is a 143-amino-acid chain: 3-hydroxyacyl-[acyl-carrier-protein] dehydratase FabZ (143 aa).

Residue His48 is part of the active site.

The protein belongs to the thioester dehydratase family. FabZ subfamily.

Its subcellular location is the cytoplasm. The enzyme catalyses a (3R)-hydroxyacyl-[ACP] = a (2E)-enoyl-[ACP] + H2O. Functionally, involved in unsaturated fatty acids biosynthesis. Catalyzes the dehydration of short chain beta-hydroxyacyl-ACPs and long chain saturated and unsaturated beta-hydroxyacyl-ACPs. The chain is 3-hydroxyacyl-[acyl-carrier-protein] dehydratase FabZ from Roseiflexus sp. (strain RS-1).